The sequence spans 301 residues: Ribonuclease Z (301 aa).

Zn(2+) is bound by residues histidine 63, histidine 65, aspartate 67, histidine 68, histidine 141, aspartate 204, and histidine 262. The active-site Proton acceptor is the aspartate 67.

Belongs to the RNase Z family. Homodimer. The cofactor is Zn(2+).

The catalysed reaction is Endonucleolytic cleavage of RNA, removing extra 3' nucleotides from tRNA precursor, generating 3' termini of tRNAs. A 3'-hydroxy group is left at the tRNA terminus and a 5'-phosphoryl group is left at the trailer molecule.. Its function is as follows. Zinc phosphodiesterase, which displays some tRNA 3'-processing endonuclease activity. Probably involved in tRNA maturation, by removing a 3'-trailer from precursor tRNA. This Streptomyces coelicolor (strain ATCC BAA-471 / A3(2) / M145) protein is Ribonuclease Z.